A 244-amino-acid chain; its full sequence is Ribosomal RNA large subunit methyltransferase E (244 aa).

5 residues coordinate S-adenosyl-L-methionine: G81, W83, D109, D125, and D149. The Proton acceptor role is filled by K189.

This sequence belongs to the class I-like SAM-binding methyltransferase superfamily. RNA methyltransferase RlmE family.

The protein resides in the cytoplasm. It catalyses the reaction uridine(2552) in 23S rRNA + S-adenosyl-L-methionine = 2'-O-methyluridine(2552) in 23S rRNA + S-adenosyl-L-homocysteine + H(+). Its function is as follows. Specifically methylates the uridine in position 2552 of 23S rRNA at the 2'-O position of the ribose in the fully assembled 50S ribosomal subunit. This is Ribosomal RNA large subunit methyltransferase E from Cereibacter sphaeroides (strain ATCC 17029 / ATH 2.4.9) (Rhodobacter sphaeroides).